A 134-amino-acid chain; its full sequence is Profilin-2 (134 aa).

Cys13 and Cys118 are oxidised to a cystine. The Involved in PIP2 interaction motif lies at 84–100 (AVIRGKKGSGGITIKKT). Position 114 is a phosphothreonine (Thr114).

It belongs to the profilin family. Occurs in many kinds of cells as a complex with monomeric actin in a 1:1 ratio. In terms of processing, phosphorylated by MAP kinases.

It is found in the cytoplasm. Its subcellular location is the cytoskeleton. Its function is as follows. Binds to actin and affects the structure of the cytoskeleton. At high concentrations, profilin prevents the polymerization of actin, whereas it enhances it at low concentrations. This chain is Profilin-2, found in Olea europaea (Common olive).